The chain runs to 141 residues: Nucleoside diphosphate kinase (141 aa).

The ATP site is built by lysine 11, phenylalanine 59, arginine 87, threonine 93, arginine 104, and asparagine 114. Residue histidine 117 is the Pros-phosphohistidine intermediate of the active site.

It belongs to the NDK family. Homotetramer. It depends on Mg(2+) as a cofactor.

Its subcellular location is the cytoplasm. The catalysed reaction is a 2'-deoxyribonucleoside 5'-diphosphate + ATP = a 2'-deoxyribonucleoside 5'-triphosphate + ADP. The enzyme catalyses a ribonucleoside 5'-diphosphate + ATP = a ribonucleoside 5'-triphosphate + ADP. In terms of biological role, major role in the synthesis of nucleoside triphosphates other than ATP. The ATP gamma phosphate is transferred to the NDP beta phosphate via a ping-pong mechanism, using a phosphorylated active-site intermediate. The polypeptide is Nucleoside diphosphate kinase (Vibrio parahaemolyticus serotype O3:K6 (strain RIMD 2210633)).